Here is a 255-residue protein sequence, read N- to C-terminus: uncharacterized protein (255 aa).

Residues Pro-3–Ser-58 enclose the HTH deoR-type domain. Positions Val-20 to Asp-39 form a DNA-binding region, H-T-H motif.

This is an uncharacterized protein from Escherichia coli (strain K12).